The primary structure comprises 493 residues: MSFKDLRSFIDHLESQGELKRISHPVDPNLEMTEIADRVLRAKGPALLFENPVGNDMPVLANLFGTPKRVAMALGKEDPLALREVGELLAFLKEPEPPRGFKDAIAKIPMFKQALNMPPKTVRNPPCQQVVKTGEEVDLTKLPIQHCWPGDVAPLVTWGLTITKGPRQKRQNLGIYRQQLLGRDKLIMRWLDHRGGALDFKDFKEKHPGERYPVVVALGSDPVTILGAVTPVPDSMSEYAFAGLLRGERTDVCKAISCDLEVPATSEIILEGYIDPDEMAEEGPYGDHTGYYNETDSFPVFTVTHITHRKDAIYHSTYTGRPPDEPAMLGVALNEVFVPILRKQYPEIIDFYLPPEGCSYRMAVISIRKQYPGHAKRVMMGAWSFLRQFMYTKFIVVVDEDVNCRDWNDVIWAITTRMDPKRDTVMIENTPIDYLDFASPVAGLGSKMGMDATNKWEGETDREWGTPIVMDQAVKDKVDQIWADLGIDDAPTL.

Position 172 (asparagine 172) interacts with Mn(2+). Residues isoleucine 175–arginine 177, arginine 189–leucine 191, and arginine 194–glycine 195 contribute to the prenylated FMN site. Mn(2+) is bound at residue glutamate 238. Aspartate 287 (proton donor) is an active-site residue.

It belongs to the UbiD family. Homohexamer. Prenylated FMN serves as cofactor. Requires Mn(2+) as cofactor.

The protein localises to the cell membrane. It carries out the reaction a 4-hydroxy-3-(all-trans-polyprenyl)benzoate + H(+) = a 2-(all-trans-polyprenyl)phenol + CO2. It participates in cofactor biosynthesis; ubiquinone biosynthesis. Functionally, catalyzes the decarboxylation of 3-octaprenyl-4-hydroxy benzoate to 2-octaprenylphenol, an intermediate step in ubiquinone biosynthesis. This is 3-octaprenyl-4-hydroxybenzoate carboxy-lyase from Shewanella woodyi (strain ATCC 51908 / MS32).